The primary structure comprises 141 residues: Nucleoside diphosphate kinase (141 aa).

The ATP site is built by Lys11, Phe59, Arg87, Thr93, Arg104, and Asn114. His117 (pros-phosphohistidine intermediate) is an active-site residue.

It belongs to the NDK family. Homotetramer. Mg(2+) serves as cofactor.

It is found in the cytoplasm. It catalyses the reaction a 2'-deoxyribonucleoside 5'-diphosphate + ATP = a 2'-deoxyribonucleoside 5'-triphosphate + ADP. The catalysed reaction is a ribonucleoside 5'-diphosphate + ATP = a ribonucleoside 5'-triphosphate + ADP. In terms of biological role, major role in the synthesis of nucleoside triphosphates other than ATP. The ATP gamma phosphate is transferred to the NDP beta phosphate via a ping-pong mechanism, using a phosphorylated active-site intermediate. The sequence is that of Nucleoside diphosphate kinase from Histophilus somni (strain 2336) (Haemophilus somnus).